A 620-amino-acid polypeptide reads, in one-letter code: Glutathione-regulated potassium-efflux system protein KefC (620 aa).

Helical transmembrane passes span 4 to 24, 26 to 46, 54 to 74, 90 to 110, 114 to 134, 149 to 169, 178 to 198, 218 to 238, 270 to 290, 294 to 314, 327 to 347, and 359 to 379; these read HTLV…PIAV, LGLG…LWGL, SILH…GLEL, GALQ…LLGL, VAEL…MQAM, FAVL…IPLL, MGAF…VVLL, VFSA…EEVG, GLLL…GTLI, LRIV…LWLI, WFAV…GAAQ, and SLTL…VILN. The 120-residue stretch at 399 to 518 folds into the RCK N-terminal domain; sequence QPRVIIAGFG…AGVEKPERET (120 aa). Residues 597–620 form a disordered region; the sequence is GWQGTEEGKHTGNMADEPETKPSS.

The protein belongs to the monovalent cation:proton antiporter 2 (CPA2) transporter (TC 2.A.37) family. KefC subfamily. Homodimer. Interacts with the regulatory subunit KefF.

Its subcellular location is the cell inner membrane. Functionally, pore-forming subunit of a potassium efflux system that confers protection against electrophiles. Catalyzes K(+)/H(+) antiport. This is Glutathione-regulated potassium-efflux system protein KefC from Shigella flexneri serotype 5b (strain 8401).